A 398-amino-acid chain; its full sequence is Serine/threonine-protein kinase ppk23 (398 aa).

The 286-residue stretch at 74–359 (YEILEKIEEG…AKEALEHPYF (286 aa)) folds into the Protein kinase domain. ATP is bound by residues 80 to 88 (IEEGSYGIV) and lysine 103. The active-site Proton acceptor is aspartate 198. The interval 359–398 (FYESPRPKDPKFFPTFPSKAKGESKEKNVFQSFRSASPKK) is disordered. Residues 387-398 (VFQSFRSASPKK) are compositionally biased toward polar residues.

Belongs to the protein kinase superfamily. Ser/Thr protein kinase family.

It is found in the nucleus. The catalysed reaction is L-seryl-[protein] + ATP = O-phospho-L-seryl-[protein] + ADP + H(+). It carries out the reaction L-threonyl-[protein] + ATP = O-phospho-L-threonyl-[protein] + ADP + H(+). The sequence is that of Serine/threonine-protein kinase ppk23 (ppk23) from Schizosaccharomyces pombe (strain 972 / ATCC 24843) (Fission yeast).